The chain runs to 260 residues: Ubiquinone/menaquinone biosynthesis C-methyltransferase UbiE (260 aa).

S-adenosyl-L-methionine-binding positions include Thr83, Asp104, and 132–133 (NA).

The protein belongs to the class I-like SAM-binding methyltransferase superfamily. MenG/UbiE family.

It carries out the reaction a 2-demethylmenaquinol + S-adenosyl-L-methionine = a menaquinol + S-adenosyl-L-homocysteine + H(+). It catalyses the reaction a 2-methoxy-6-(all-trans-polyprenyl)benzene-1,4-diol + S-adenosyl-L-methionine = a 5-methoxy-2-methyl-3-(all-trans-polyprenyl)benzene-1,4-diol + S-adenosyl-L-homocysteine + H(+). It participates in quinol/quinone metabolism; menaquinone biosynthesis; menaquinol from 1,4-dihydroxy-2-naphthoate: step 2/2. The protein operates within cofactor biosynthesis; ubiquinone biosynthesis. Its function is as follows. Methyltransferase required for the conversion of demethylmenaquinol (DMKH2) to menaquinol (MKH2) and the conversion of 2-polyprenyl-6-methoxy-1,4-benzoquinol (DDMQH2) to 2-polyprenyl-3-methyl-6-methoxy-1,4-benzoquinol (DMQH2). The sequence is that of Ubiquinone/menaquinone biosynthesis C-methyltransferase UbiE from Bartonella bacilliformis (strain ATCC 35685 / KC583 / Herrer 020/F12,63).